We begin with the raw amino-acid sequence, 245 residues long: 1-(5-phosphoribosyl)-5-[(5-phosphoribosylamino)methylideneamino] imidazole-4-carboxamide isomerase (245 aa).

Catalysis depends on D7, which acts as the Proton acceptor. D129 serves as the catalytic Proton donor.

Belongs to the HisA/HisF family.

It localises to the cytoplasm. The catalysed reaction is 1-(5-phospho-beta-D-ribosyl)-5-[(5-phospho-beta-D-ribosylamino)methylideneamino]imidazole-4-carboxamide = 5-[(5-phospho-1-deoxy-D-ribulos-1-ylimino)methylamino]-1-(5-phospho-beta-D-ribosyl)imidazole-4-carboxamide. It functions in the pathway amino-acid biosynthesis; L-histidine biosynthesis; L-histidine from 5-phospho-alpha-D-ribose 1-diphosphate: step 4/9. In Salmonella arizonae (strain ATCC BAA-731 / CDC346-86 / RSK2980), this protein is 1-(5-phosphoribosyl)-5-[(5-phosphoribosylamino)methylideneamino] imidazole-4-carboxamide isomerase.